The chain runs to 725 residues: Peroxisomal fatty acid beta-oxidation multifunctional protein MFP2 (725 aa).

The active-site Nucleophile is E119. The Proton acceptor role is filled by E139. The short motif at 723–725 is the Microbody targeting signal element; sequence SRL.

It in the N-terminal section; belongs to the enoyl-CoA hydratase/isomerase family. The protein in the central section; belongs to the 3-hydroxyacyl-CoA dehydrogenase family. As to expression, highly expressed in senescing leaves and at lower levels in flowers and siliques.

The protein localises to the glyoxysome. Its subcellular location is the peroxisome. The enzyme catalyses a (3S)-3-hydroxyacyl-CoA = a (2E)-enoyl-CoA + H2O. The catalysed reaction is a 4-saturated-(3S)-3-hydroxyacyl-CoA = a (3E)-enoyl-CoA + H2O. It catalyses the reaction (3S)-3-hydroxybutanoyl-CoA = (2E)-butenoyl-CoA + H2O. It carries out the reaction (3S)-hydroxyoctanoyl-CoA = (2E)-octenoyl-CoA + H2O. The enzyme catalyses (3S)-3-hydroxydodecanoyl-CoA = (2E)-dodecenoyl-CoA + H2O. The catalysed reaction is (3S)-hydroxytetradecanoyl-CoA = (2E)-tetradecenoyl-CoA + H2O. It catalyses the reaction (3S)-hydroxyhexanoyl-CoA = (2E)-hexenoyl-CoA + H2O. It carries out the reaction a (3Z)-enoyl-CoA = a 4-saturated (2E)-enoyl-CoA. The enzyme catalyses a (3E)-enoyl-CoA = a 4-saturated (2E)-enoyl-CoA. The catalysed reaction is (3S)-3-hydroxybutanoyl-CoA = (3R)-3-hydroxybutanoyl-CoA. It catalyses the reaction a (3S)-3-hydroxyacyl-CoA + NAD(+) = a 3-oxoacyl-CoA + NADH + H(+). It carries out the reaction (3S)-3-hydroxybutanoyl-CoA + NAD(+) = acetoacetyl-CoA + NADH + H(+). The enzyme catalyses (3S)-hydroxyhexanoyl-CoA + NAD(+) = 3-oxohexanoyl-CoA + NADH + H(+). The catalysed reaction is (3S)-hydroxyoctanoyl-CoA + NAD(+) = 3-oxooctanoyl-CoA + NADH + H(+). It catalyses the reaction (3S)-3-hydroxydodecanoyl-CoA + NAD(+) = 3-oxododecanoyl-CoA + NADH + H(+). It carries out the reaction (3S)-hydroxytetradecanoyl-CoA + NAD(+) = 3-oxotetradecanoyl-CoA + NADH + H(+). It functions in the pathway lipid metabolism; fatty acid beta-oxidation. In terms of biological role, involved in peroxisomal fatty acid beta-oxidation during seed germination. Possesses enoyl-CoA hydratase activity against long chain substrates (C14-C18) and 3-hydroxyacyl-CoA dehydrogenase activity against chains of variable sizes (C6-C18). Possesses 3-hydroxy-3-phenylpropionyl-CoA dehydrogenase activity and is involved in the peroxisomal beta-oxidation pathway for the biosynthesis of benzoic acid (BA). Required for the accumulation in seeds of substituted hydroxybenzoylated choline esters, which are BA-containing secondary metabolites. Fatty acid beta-oxidation pathway in peroxisomes regulates gene silencing, histone acetylation and DNA methylation. In Arabidopsis thaliana (Mouse-ear cress), this protein is Peroxisomal fatty acid beta-oxidation multifunctional protein MFP2.